Here is a 393-residue protein sequence, read N- to C-terminus: S-adenosylmethionine synthase 1 (393 aa).

A Mg(2+)-binding site is contributed by E9. Residue H15 participates in ATP binding. E43 provides a ligand contact to K(+). E56 and Q99 together coordinate L-methionine. ATP contacts are provided by residues 167-169 (DGK), 235-238 (SGRF), D246, 252-253 (RK), A269, K273, and K277. Residue D246 coordinates L-methionine. K277 provides a ligand contact to L-methionine.

Belongs to the AdoMet synthase family. Homotetramer. The cofactor is Mn(2+). Mg(2+) is required as a cofactor. Requires Co(2+) as cofactor. K(+) serves as cofactor. Mostly expressed in stems.

It localises to the cytoplasm. It carries out the reaction L-methionine + ATP + H2O = S-adenosyl-L-methionine + phosphate + diphosphate. Its pathway is amino-acid biosynthesis; S-adenosyl-L-methionine biosynthesis; S-adenosyl-L-methionine from L-methionine: step 1/1. Functionally, catalyzes the formation of S-adenosylmethionine from methionine and ATP. The reaction comprises two steps that are both catalyzed by the same enzyme: formation of S-adenosylmethionine (AdoMet) and triphosphate, and subsequent hydrolysis of the triphosphate. In Solanum lycopersicum (Tomato), this protein is S-adenosylmethionine synthase 1 (SAM1).